A 657-amino-acid polypeptide reads, in one-letter code: Matrix metalloproteinase-15 (657 aa).

The N-terminal stretch at 1–36 (MGSDRSALGRPGCTGSCLSSRASLLPLLLVLLDCLG) is a signal peptide. Residues 37 to 127 (HGTASKDAEV…KANLRRRRKR (91 aa)) constitute a propeptide that is removed on maturation. A Cysteine switch motif is present at residues 105–112 (PRCGVPDQ). Cysteine 107 serves as a coordination point for Zn(2+). The Extracellular portion of the chain corresponds to 128–614 (YTLTGKAWNN…MEEVVRTVNV (487 aa)). Asparagine 146 carries N-linked (GlcNAc...) asparagine glycosylation. Histidine 255 is a binding site for Zn(2+). Glutamate 256 is a catalytic residue. Zn(2+) is bound by residues histidine 259 and histidine 265. The disordered stretch occupies residues 295–365 (IQQLYGSPDG…ERPDQYGPNI (71 aa)). Over residues 328 to 337 (PRPPQPPHPG) the composition is skewed to pro residues. Hemopexin repeat units lie at residues 363–411 (PNIC…WRGL), 412–457 (PGNI…GTDI), 459–507 (YDRI…QGIP), and 508–555 (TSPK…FMGC). The cysteines at positions 366 and 555 are disulfide-linked. An N-linked (GlcNAc...) asparagine glycan is attached at asparagine 414. Residues 561-599 (PRSRWPDVARPPFNPNGGAEPEADGDSKEENAGDKDEGS) are disordered. Over residues 585–599 (GDSKEENAGDKDEGS) the composition is skewed to basic and acidic residues. A helical membrane pass occupies residues 615–635 (VMVLVPLLLLLCILGLAFALV). The Cytoplasmic portion of the chain corresponds to 636–657 (QMQRKGAPRMLLYCKRSLQEWV).

This sequence belongs to the peptidase M10A family. It depends on Zn(2+) as a cofactor. The cofactor is Ca(2+). In terms of processing, the precursor is cleaved by a furin endopeptidase.

Its subcellular location is the membrane. Its function is as follows. Endopeptidase that degrades various components of the extracellular matrix. May activate progelatinase A. This chain is Matrix metalloproteinase-15 (Mmp15), found in Mus musculus (Mouse).